A 537-amino-acid polypeptide reads, in one-letter code: 5,6-dihydroxyindole-2-carboxylic acid oxidase (537 aa).

The N-terminal stretch at 1-24 (MSAPKLLSLGCIFFPLLLFQQARA) is a signal peptide. Topologically, residues 25-477 (QFPRQCATVE…WPSREFSVPE (453 aa)) are lumenal, melanosome. 5 cysteine pairs are disulfide-bonded: Cys30–Cys41, Cys42–Cys65, Cys56–Cys99, Cys101–Cys110, and Cys113–Cys122. N-linked (GlcNAc...) asparagine glycans are attached at residues Asn96 and Asn104. Asn181 carries an N-linked (GlcNAc...) asparagine glycan. Zn(2+) contacts are provided by His192, His215, and His224. Intrachain disulfides connect Cys258–Cys261 and Cys290–Cys303. Asn304 and Asn350 each carry an N-linked (GlcNAc...) asparagine glycan. Positions 377 and 381 each coordinate Zn(2+). Residue Asn385 is glycosylated (N-linked (GlcNAc...) asparagine). His404 contacts Zn(2+). A helical transmembrane segment spans residues 478 to 501 (IIAIAVVGALLLVALIFGTASYLI). Topologically, residues 502–537 (RARRSMDEANQPLLTDQYQCYAEEYEKLQNPNQSVV) are cytoplasmic.

The protein belongs to the tyrosinase family. In terms of assembly, monomer. Interacts with ATP7A. Interacts with SLC45A2. The cofactor is Cu(2+). Zn(2+) is required as a cofactor. Post-translationally, glycosylated. Pigment cells.

The protein resides in the melanosome membrane. It catalyses the reaction 2 5,6-dihydroxyindole-2-carboxylate + O2 = 2 indole-5,6-quinone-2-carboxylate + 2 H2O. Its pathway is pigment biosynthesis; melanin biosynthesis. The activity depends critically on the nature of the bound metal ion. Catalyzes the oxidation of 5,6-dihydroxyindole-2-carboxylic acid (DHICA) in the presence of bound Cu(2+) ions, but lacks activity in the presence of bound Zn(2+) ions. Functionally, plays a role in melanin biosynthesis. Catalyzes the oxidation of 5,6-dihydroxyindole-2-carboxylic acid (DHICA) into indole-5,6-quinone-2-carboxylic acid in the presence of bound Cu(2+) ions, but not in the presence of Zn(2+). May regulate or influence the type of melanin synthesized. Also to a lower extent, capable of hydroxylating tyrosine and producing melanin. The protein is 5,6-dihydroxyindole-2-carboxylic acid oxidase of Homo sapiens (Human).